The primary structure comprises 329 residues: Vomeronasal type-1 receptor 42 (329 aa).

Residues 1–32 lie on the Extracellular side of the membrane; it reads MGDILFSSPQSMFSHTMNKNSILHTHSIIGKT. A helical transmembrane segment spans residues 33 to 53; the sequence is FFSEIGIGISGNSFLLLVHIL. Topologically, residues 54-65 are cytoplasmic; that stretch reads KFIRGHRPRLTD. Residues 66 to 86 traverse the membrane as a helical segment; it reads LPIGLLSLIHLLMLLVAAFIA. Topologically, residues 87–109 are extracellular; sequence TDIFISRRGWDDIICKFLVYLYR. Cysteine 101 and cysteine 188 form a disulfide bridge. Residues 110–130 traverse the membrane as a helical segment; the sequence is VLRGFSLCTTSMLSILQAIIL. Over 131–150 the chain is Cytoplasmic; that stretch reads SPRSSCLAKFKHISPHHISG. The helical transmembrane segment at 151–171 threads the bilayer; it reads AILFLSVLYMLIGSQLLVSII. Residues 172 to 209 are Extracellular-facing; it reads ATPNLTMNDFIYVTQSCSILPLSYLMQSIYSTLLAIRE. Asparagine 175 is a glycosylation site (N-linked (GlcNAc...) asparagine). Residues 210 to 230 form a helical membrane-spanning segment; sequence FFLISLMVLSNWYMVALLSMH. Over 231–254 the chain is Cytoplasmic; it reads RKQTQHLHGTNLSPKKSPEQSATQ. Residues 255–275 form a helical membrane-spanning segment; that stretch reads TILMLISFFLLMTIYDTIVSC. The Extracellular portion of the chain corresponds to 276–285; that stretch reads SRTMFLNDPT. The chain crosses the membrane as a helical span at residues 286–306; the sequence is SYSIELFIMHIYATVSPFVFM. At 307–329 the chain is on the cytoplasmic side; sequence STEKHIVNFLRSLGKRVINFNLH.

It belongs to the G-protein coupled receptor 1 family.

The protein resides in the cell membrane. Functionally, putative pheromone receptor implicated in the regulation of social and reproductive behavior. In Mus musculus (Mouse), this protein is Vomeronasal type-1 receptor 42 (Vmn1r42).